A 1063-amino-acid chain; its full sequence is NAD-specific glutamate dehydrogenase (1063 aa).

This sequence belongs to the Glu/Leu/Phe/Val dehydrogenases family. Highly divergent. As to quaternary structure, homotetramer.

It catalyses the reaction L-glutamate + NAD(+) + H2O = 2-oxoglutarate + NH4(+) + NADH + H(+). Its activity is regulated as follows. Allosterically activated by NADP(+). The sequence is that of NAD-specific glutamate dehydrogenase from Achlya klebsiana.